The following is a 373-amino-acid chain: Stationary phase protein 5 (373 aa).

Functionally, required for survival at high temperature during stationary phase. The protein is Stationary phase protein 5 (SPG5) of Saccharomyces cerevisiae (strain ATCC 204508 / S288c) (Baker's yeast).